Here is a 305-residue protein sequence, read N- to C-terminus: Ribonuclease BN (305 aa).

Residues His64, His66, Asp68, His69, His141, Asp212, and His270 each coordinate Zn(2+). The Proton acceptor role is filled by Asp68.

It belongs to the RNase Z family. RNase BN subfamily. In terms of assembly, homodimer. Zn(2+) is required as a cofactor.

Its function is as follows. Zinc phosphodiesterase, which has both exoribonuclease and endoribonuclease activities. The polypeptide is Ribonuclease BN (Escherichia coli O81 (strain ED1a)).